The sequence spans 488 residues: Cobyric acid synthase (488 aa).

The 194-residue stretch at 248 to 441 (VLRVVVPALP…VHGLFDTPAA (194 aa)) folds into the GATase cobBQ-type domain. The Nucleophile role is filled by Cys-328. The active site involves His-433.

Belongs to the CobB/CobQ family. CobQ subfamily.

It participates in cofactor biosynthesis; adenosylcobalamin biosynthesis. Functionally, catalyzes amidations at positions B, D, E, and G on adenosylcobyrinic A,C-diamide. NH(2) groups are provided by glutamine, and one molecule of ATP is hydrogenolyzed for each amidation. This chain is Cobyric acid synthase, found in Burkholderia vietnamiensis (strain G4 / LMG 22486) (Burkholderia cepacia (strain R1808)).